We begin with the raw amino-acid sequence, 595 residues long: Beta-(1--&gt;2)glucan export ATP-binding/permease protein NdvA (595 aa).

The next 5 helical transmembrane spans lie at 21 to 41, 56 to 76, 129 to 149, 158 to 178, and 252 to 272; these read FLLI…EPIL, LVTL…YVLV, IWLE…VLVP, LSIV…LVMQ, and ISIV…QLSV. The ABC transmembrane type-1 domain maps to 21 to 301; it reads FLLICTANIT…ISGFINLAVS (281 aa). An ABC transporter domain is found at 335–569; that stretch reads IQFHHVTYEF…DGHFYKLLKA (235 aa). 368 to 375 is a binding site for ATP; it reads GPTGAGKT.

The protein belongs to the ABC transporter superfamily. Beta-(1--&gt;2)glucan exporter (TC 3.A.1.108.1) family. As to quaternary structure, homodimer.

The protein localises to the cell inner membrane. The catalysed reaction is [(1-&gt;2)-beta-D-glucosyl](n)(in) + ATP + H2O = [(1-&gt;2)-beta-D-glucosyl](n)(out) + ADP + phosphate + H(+). Involved in beta-(1--&gt;2)glucan export. Transmembrane domains (TMD) form a pore in the inner membrane and the ATP-binding domain (NBD) is responsible for energy generation. The protein is Beta-(1--&gt;2)glucan export ATP-binding/permease protein NdvA of Bartonella bacilliformis (strain ATCC 35685 / KC583 / Herrer 020/F12,63).